Here is a 377-residue protein sequence, read N- to C-terminus: MYTFVVRDENSSVYAEVSRLLLATGHWKRLRRDNPRFNLMLGERNRLPFGRLGHEPGLVQLVNYYRGADKLCRKASLVKLIKTSPELAESCTWFPESYVIYPTNLKTPVAPAQNGIQPPISNSRTDEREFFLASYNRKKEDGEGNVWIAKSSAGAKGEGILISSEASELLDFIDNQGQVHVIQKYLEHPLLLEPGHRKFDIRSWVLVDHQYNIYLYREGVLRTASEPYHVDNFQDKTCHLTNHCIQKEYSKNYGKYEEGNEMFFKEFNQYLTSALNITLESSILLQIKHIIRNCLLSVEPAISTKHLPYQSFQLFGFDFMVDEELKVWLIEVNGAPACAQKLYAELCQGIVDIAISSVFPPPDVEQPQTQPAAFIKL.

Residues 3 to 370 enclose the TTL domain; that stretch reads TFVVRDENSS…PPDVEQPQTQ (368 aa).

This sequence belongs to the tubulin--tyrosine ligase family. Monomer. It depends on Mg(2+) as a cofactor. K(+) serves as cofactor.

The catalysed reaction is C-terminal L-alpha-aminoacyl-L-glutamyl-L-glutamyl-[tubulin] + L-tyrosine + ATP = C-terminal L-alpha-aminoacyl-L-glutamyl-L-glutamyl-L-tyrosyl-[tubulin] + ADP + phosphate + H(+). Functionally, catalyzes the post-translational addition of a tyrosine to the C-terminal end of detyrosinated alpha-tubulin. This Homo sapiens (Human) protein is Tubulin--tyrosine ligase (TTL).